A 175-amino-acid polypeptide reads, in one-letter code: Inorganic pyrophosphatase (175 aa).

Residues Lys29, Arg43, and Tyr55 each contribute to the substrate site. Residues Asp65, Asp70, and Asp102 each contribute to the Mg(2+) site. Tyr141 serves as a coordination point for substrate.

The protein belongs to the PPase family. In terms of assembly, homohexamer. Mg(2+) is required as a cofactor.

The protein resides in the cytoplasm. It catalyses the reaction diphosphate + H2O = 2 phosphate + H(+). Functionally, catalyzes the hydrolysis of inorganic pyrophosphate (PPi) forming two phosphate ions. This is Inorganic pyrophosphatase from Rickettsia bellii (strain RML369-C).